Here is a 347-residue protein sequence, read N- to C-terminus: Probable replication factor C subunit 5 (347 aa).

Position 64–71 (64–71 (GPPGTGKT)) interacts with ATP.

This sequence belongs to the activator 1 small subunits family. As to quaternary structure, heteropentamer of various rfc subunits that forms a complex (RFC) with PCNA in the presence of ATP.

The protein resides in the nucleus. Its function is as follows. The elongation of primed DNA templates by DNA polymerase delta and epsilon requires the action of the accessory proteins PCNA and activator 1. The polypeptide is Probable replication factor C subunit 5 (rfc5) (Dictyostelium discoideum (Social amoeba)).